The following is a 676-amino-acid chain: Methionine--tRNA ligase (676 aa).

Residues 15-25 (PYANGSIHLGH) carry the 'HIGH' region motif. Zn(2+) is bound by residues Cys-146, Cys-149, Cys-159, and Cys-162. A 'KMSKS' region motif is present at residues 332–336 (KMSKS). Residue Lys-335 coordinates ATP. Positions 574–676 (DFAKVDMRIA…SGAQPGQQVK (103 aa)) constitute a tRNA-binding domain.

Belongs to the class-I aminoacyl-tRNA synthetase family. MetG type 1 subfamily. As to quaternary structure, homodimer. Requires Zn(2+) as cofactor.

The protein localises to the cytoplasm. The catalysed reaction is tRNA(Met) + L-methionine + ATP = L-methionyl-tRNA(Met) + AMP + diphosphate. Is required not only for elongation of protein synthesis but also for the initiation of all mRNA translation through initiator tRNA(fMet) aminoacylation. The sequence is that of Methionine--tRNA ligase from Erwinia tasmaniensis (strain DSM 17950 / CFBP 7177 / CIP 109463 / NCPPB 4357 / Et1/99).